A 286-amino-acid polypeptide reads, in one-letter code: 4-hydroxy-tetrahydrodipicolinate synthase (286 aa).

Position 42 (threonine 42) interacts with pyruvate. Catalysis depends on tyrosine 129, which acts as the Proton donor/acceptor. The active-site Schiff-base intermediate with substrate is the lysine 157. Pyruvate is bound at residue isoleucine 196.

The protein belongs to the DapA family. As to quaternary structure, homotetramer; dimer of dimers.

It localises to the cytoplasm. The enzyme catalyses L-aspartate 4-semialdehyde + pyruvate = (2S,4S)-4-hydroxy-2,3,4,5-tetrahydrodipicolinate + H2O + H(+). Its pathway is amino-acid biosynthesis; L-lysine biosynthesis via DAP pathway; (S)-tetrahydrodipicolinate from L-aspartate: step 3/4. Functionally, catalyzes the condensation of (S)-aspartate-beta-semialdehyde [(S)-ASA] and pyruvate to 4-hydroxy-tetrahydrodipicolinate (HTPA). The protein is 4-hydroxy-tetrahydrodipicolinate synthase of Chlamydia trachomatis serovar A (strain ATCC VR-571B / DSM 19440 / HAR-13).